The following is a 160-amino-acid chain: 2-C-methyl-D-erythritol 2,4-cyclodiphosphate synthase (160 aa).

Residues Asp12 and His14 each coordinate a divalent metal cation. Residues 12–14 (DVH) and 38–39 (HS) contribute to the 4-CDP-2-C-methyl-D-erythritol 2-phosphate site. His46 lines the a divalent metal cation pocket. 4-CDP-2-C-methyl-D-erythritol 2-phosphate contacts are provided by residues 60-62 (DIG), 65-69 (FPDTD), 136-139 (TTTE), Phe143, and Arg146.

Belongs to the IspF family. In terms of assembly, homotrimer. The cofactor is a divalent metal cation.

It catalyses the reaction 4-CDP-2-C-methyl-D-erythritol 2-phosphate = 2-C-methyl-D-erythritol 2,4-cyclic diphosphate + CMP. It participates in isoprenoid biosynthesis; isopentenyl diphosphate biosynthesis via DXP pathway; isopentenyl diphosphate from 1-deoxy-D-xylulose 5-phosphate: step 4/6. In terms of biological role, involved in the biosynthesis of isopentenyl diphosphate (IPP) and dimethylallyl diphosphate (DMAPP), two major building blocks of isoprenoid compounds. Catalyzes the conversion of 4-diphosphocytidyl-2-C-methyl-D-erythritol 2-phosphate (CDP-ME2P) to 2-C-methyl-D-erythritol 2,4-cyclodiphosphate (ME-CPP) with a corresponding release of cytidine 5-monophosphate (CMP). The sequence is that of 2-C-methyl-D-erythritol 2,4-cyclodiphosphate synthase from Acinetobacter baumannii (strain SDF).